The primary structure comprises 303 residues: Cytosolic Fe-S cluster assembly factor CFD1 (303 aa).

15–22 (GKGGVGKS) serves as a coordination point for ATP. 2 residues coordinate [4Fe-4S] cluster: C199 and C202.

Belongs to the Mrp/NBP35 ATP-binding proteins family. NUBP2/CFD1 subfamily. Heterotetramer of 2 NBP35 and 2 CFD1 chains. [4Fe-4S] cluster serves as cofactor.

It is found in the cytoplasm. Component of the cytosolic iron-sulfur (Fe/S) protein assembly (CIA) machinery. Required for maturation of extramitochondrial Fe-S proteins. The NBP35-CFD1 heterotetramer forms a Fe-S scaffold complex, mediating the de novo assembly of an Fe-S cluster and its transfer to target apoproteins. The chain is Cytosolic Fe-S cluster assembly factor CFD1 from Chaetomium globosum (strain ATCC 6205 / CBS 148.51 / DSM 1962 / NBRC 6347 / NRRL 1970) (Soil fungus).